The sequence spans 540 residues: MQQVLENLTELPSSTGAEEIDLIFLKGIMENPIVKSLAKAHERLEDSKLEAVSDNNLELVNEILEDITPLINVDENVAELVGILKEPHFQSLLEAHDIVASKCYDSPPSSPEMNNSSINNQLLPVDAIRILGIHKRAGEPLGVTFRVENNDLVIARILHGGMIDRQGLLHVGDIIKEVNGHEVGNNPKELQELLKNISGSVTLKILPSYRDTITPQQVFVKCHFDYNPYNDNLIPCKEAGLKFSKGEILQIVNREDPNWWQASHVKEGGSAGLIPSQFLEEKRKAFVRRDWDNSGPFCGTISSKKKKKMMYLTTRNAEFDRHEIQIYEEVAKMPPFQRKTLVLIGAQGVGRRSLKNRFIVLNPTRFGTTVPFTSRKPREDEKDGQAYKFVSRSEMEADIKAGKYLEHGEYEGNLYGTKIDSILEVVQTGRTCILDVNPQALKVLRTSEFMPYVVFIAAPELETLRAMHKAVVDAGITTKLLTDSDLKKTVDESARIQRAYNHYFDLIIINDNLDKAFEKLQTAIEKLRMEPQWVPISWVY.

2 L27 domains span residues 1–48 (MQQV…EDSK) and 49–107 (LEAV…YDSP). One can recognise a PDZ domain in the interval 130 to 209 (ILGIHKRAGE…SVTLKILPSY (80 aa)). An SH3 domain is found at 215–284 (PQQVFVKCHF…PSQFLEEKRK (70 aa)). One can recognise a Guanylate kinase-like domain in the interval 338–525 (RKTLVLIGAQ…AFEKLQTAIE (188 aa)). At tyrosine 500 the chain carries Phosphotyrosine.

It belongs to the MAGUK family. As to quaternary structure, interacts with CADM1. Interacts with the LIN7 proteins. Abundant in testis, brain, and kidney with lower levels detectable in other tissues.

The protein localises to the membrane. The polypeptide is Protein PALS2 (Homo sapiens (Human)).